Consider the following 260-residue polypeptide: Diphthine synthase (260 aa).

Residues L9, D85, I88, 113-114 (TA), L168, A208, and H233 each bind S-adenosyl-L-methionine.

The protein belongs to the diphthine synthase family. As to quaternary structure, homodimer.

It catalyses the reaction 2-[(3S)-amino-3-carboxypropyl]-L-histidyl-[translation elongation factor 2] + 3 S-adenosyl-L-methionine = diphthine-[translation elongation factor 2] + 3 S-adenosyl-L-homocysteine + 3 H(+). Its pathway is protein modification; peptidyl-diphthamide biosynthesis. Its function is as follows. S-adenosyl-L-methionine-dependent methyltransferase that catalyzes the trimethylation of the amino group of the modified target histidine residue in translation elongation factor 2 (EF-2), to form an intermediate called diphthine. The three successive methylation reactions represent the second step of diphthamide biosynthesis. This Halobacterium salinarum (strain ATCC 29341 / DSM 671 / R1) protein is Diphthine synthase.